Reading from the N-terminus, the 349-residue chain is Bifunctional protein FolKE (349 aa).

The 2-amino-4-hydroxy-6-hydroxymethyldihydropteridine pyrophosphokinase stretch occupies residues 1-226; sequence MQTTYLSMGS…LFEIDSSKND (226 aa). A GTP cyclohydrolase 1 region spans residues 226–349; the sequence is DSIVLIKDIP…KRMEFLESLL (124 aa).

The protein in the N-terminal section; belongs to the HPPK family. In the C-terminal section; belongs to the GTP cyclohydrolase I family. Homomer.

It carries out the reaction 6-hydroxymethyl-7,8-dihydropterin + ATP = (7,8-dihydropterin-6-yl)methyl diphosphate + AMP + H(+). The catalysed reaction is GTP + H2O = 7,8-dihydroneopterin 3'-triphosphate + formate + H(+). It participates in cofactor biosynthesis; 7,8-dihydroneopterin triphosphate biosynthesis; 7,8-dihydroneopterin triphosphate from GTP: step 1/1. It functions in the pathway cofactor biosynthesis; tetrahydrofolate biosynthesis; 2-amino-4-hydroxy-6-hydroxymethyl-7,8-dihydropteridine diphosphate from 7,8-dihydroneopterin triphosphate: step 4/4. This is Bifunctional protein FolKE (folKE) from Lactococcus lactis subsp. cremoris (strain MG1363).